Reading from the N-terminus, the 129-residue chain is D-ribose pyranase (129 aa).

Histidine 20 acts as the Proton donor in catalysis. Residues aspartate 28, histidine 96, and 118–120 contribute to the substrate site; that span reads YAN.

This sequence belongs to the RbsD / FucU family. RbsD subfamily. In terms of assembly, homodecamer.

The protein localises to the cytoplasm. It carries out the reaction beta-D-ribopyranose = beta-D-ribofuranose. Its pathway is carbohydrate metabolism; D-ribose degradation; D-ribose 5-phosphate from beta-D-ribopyranose: step 1/2. Functionally, catalyzes the interconversion of beta-pyran and beta-furan forms of D-ribose. This Exiguobacterium sp. (strain ATCC BAA-1283 / AT1b) protein is D-ribose pyranase.